Reading from the N-terminus, the 545-residue chain is CTP synthase (545 aa).

The segment at 1-266 (MTTNYIFVTG…DDYICKRFSL (266 aa)) is amidoligase domain. S14 is a CTP binding site. S14 lines the UTP pocket. ATP contacts are provided by residues 15–20 (SLGKGI) and D72. Residues D72 and E140 each contribute to the Mg(2+) site. CTP-binding positions include 147 to 149 (DIE), 187 to 192 (KTKPTQ), and K223. Residues 187–192 (KTKPTQ) and K223 contribute to the UTP site. 239-241 (KDV) is an ATP binding site. A Glutamine amidotransferase type-1 domain is found at 291 to 542 (TIGMVGKYIE…VKAANEHQKR (252 aa)). G352 is an L-glutamine binding site. C379 serves as the catalytic Nucleophile; for glutamine hydrolysis. L-glutamine-binding positions include 380-383 (LGMQ), E403, and R470. Catalysis depends on residues H515 and E517.

Belongs to the CTP synthase family. As to quaternary structure, homotetramer.

The enzyme catalyses UTP + L-glutamine + ATP + H2O = CTP + L-glutamate + ADP + phosphate + 2 H(+). It carries out the reaction L-glutamine + H2O = L-glutamate + NH4(+). It catalyses the reaction UTP + NH4(+) + ATP = CTP + ADP + phosphate + 2 H(+). It participates in pyrimidine metabolism; CTP biosynthesis via de novo pathway; CTP from UDP: step 2/2. With respect to regulation, allosterically activated by GTP, when glutamine is the substrate; GTP has no effect on the reaction when ammonia is the substrate. The allosteric effector GTP functions by stabilizing the protein conformation that binds the tetrahedral intermediate(s) formed during glutamine hydrolysis. Inhibited by the product CTP, via allosteric rather than competitive inhibition. In terms of biological role, catalyzes the ATP-dependent amination of UTP to CTP with either L-glutamine or ammonia as the source of nitrogen. Regulates intracellular CTP levels through interactions with the four ribonucleotide triphosphates. The sequence is that of CTP synthase from Salmonella newport (strain SL254).